The following is a 240-amino-acid chain: UDP-2,3-diacylglucosamine hydrolase (240 aa).

Residues aspartate 8, histidine 10, aspartate 41, asparagine 78, and histidine 113 each contribute to the Mn(2+) site. Asparagine 78–arginine 79 is a substrate binding site. 5 residues coordinate substrate: aspartate 121, serine 159, asparagine 163, lysine 166, and histidine 194. The Mn(2+) site is built by histidine 194 and histidine 196.

Belongs to the LpxH family. Requires Mn(2+) as cofactor.

It is found in the cell inner membrane. The catalysed reaction is UDP-2-N,3-O-bis[(3R)-3-hydroxytetradecanoyl]-alpha-D-glucosamine + H2O = 2-N,3-O-bis[(3R)-3-hydroxytetradecanoyl]-alpha-D-glucosaminyl 1-phosphate + UMP + 2 H(+). It functions in the pathway glycolipid biosynthesis; lipid IV(A) biosynthesis; lipid IV(A) from (3R)-3-hydroxytetradecanoyl-[acyl-carrier-protein] and UDP-N-acetyl-alpha-D-glucosamine: step 4/6. Its function is as follows. Hydrolyzes the pyrophosphate bond of UDP-2,3-diacylglucosamine to yield 2,3-diacylglucosamine 1-phosphate (lipid X) and UMP by catalyzing the attack of water at the alpha-P atom. Involved in the biosynthesis of lipid A, a phosphorylated glycolipid that anchors the lipopolysaccharide to the outer membrane of the cell. This Shewanella baltica (strain OS195) protein is UDP-2,3-diacylglucosamine hydrolase.